A 382-amino-acid chain; its full sequence is Mannitol-1-phosphate 5-dehydrogenase (382 aa).

4–15 (AVHFGAGNIGRG) provides a ligand contact to NAD(+).

It belongs to the mannitol dehydrogenase family.

The catalysed reaction is D-mannitol 1-phosphate + NAD(+) = beta-D-fructose 6-phosphate + NADH + H(+). The protein is Mannitol-1-phosphate 5-dehydrogenase of Vibrio parahaemolyticus serotype O3:K6 (strain RIMD 2210633).